A 379-amino-acid chain; its full sequence is 1-deoxy-D-xylulose 5-phosphate reductoisomerase (379 aa).

6 residues coordinate NADPH: Thr-10, Gly-11, Ser-12, Ile-13, Asn-39, and Asn-121. Lys-122 contributes to the 1-deoxy-D-xylulose 5-phosphate binding site. Glu-123 is a binding site for NADPH. Asp-147 provides a ligand contact to Mn(2+). 1-deoxy-D-xylulose 5-phosphate-binding residues include Ser-148, Glu-149, Ser-173, and His-196. Residue Glu-149 participates in Mn(2+) binding. Gly-202 serves as a coordination point for NADPH. Positions 209, 214, 215, and 218 each coordinate 1-deoxy-D-xylulose 5-phosphate. Glu-218 contributes to the Mn(2+) binding site.

This sequence belongs to the DXR family. The cofactor is Mg(2+). It depends on Mn(2+) as a cofactor.

It carries out the reaction 2-C-methyl-D-erythritol 4-phosphate + NADP(+) = 1-deoxy-D-xylulose 5-phosphate + NADPH + H(+). The protein operates within isoprenoid biosynthesis; isopentenyl diphosphate biosynthesis via DXP pathway; isopentenyl diphosphate from 1-deoxy-D-xylulose 5-phosphate: step 1/6. Its function is as follows. Catalyzes the NADPH-dependent rearrangement and reduction of 1-deoxy-D-xylulose-5-phosphate (DXP) to 2-C-methyl-D-erythritol 4-phosphate (MEP). This Chlamydia caviae (strain ATCC VR-813 / DSM 19441 / 03DC25 / GPIC) (Chlamydophila caviae) protein is 1-deoxy-D-xylulose 5-phosphate reductoisomerase.